Consider the following 503-residue polypeptide: Glucosaminyl-phosphatidylinositol-acyltransferase PIGW (503 aa).

At Met-1–Glu-21 the chain is on the lumenal side. A glycan (N-linked (GlcNAc...) asparagine) is linked at Asn-15. A helical membrane pass occupies residues Ile-22–Leu-42. Residues Ser-43–Arg-56 are Cytoplasmic-facing. A helical transmembrane segment spans residues Phe-57–Phe-75. The Lumenal segment spans residues Ser-76–Phe-78. A helical membrane pass occupies residues Val-79–Tyr-98. Topologically, residues Cys-99–Cys-131 are cytoplasmic. The helical transmembrane segment at Phe-132–Phe-152 threads the bilayer. Topologically, residues Pro-153–Glu-160 are lumenal. The helical transmembrane segment at Leu-161–Val-181 threads the bilayer. The Cytoplasmic segment spans residues Ser-182–Ser-201. The chain crosses the membrane as a helical span at residues Leu-202–Val-222. Residues Asp-223–Asn-236 are Lumenal-facing. Residues Phe-237–Leu-257 form a helical membrane-spanning segment. Over Asn-258–Arg-259 the chain is Cytoplasmic. The helical transmembrane segment at Ser-260 to Leu-280 threads the bilayer. Residues Lys-281–Gly-304 lie on the Lumenal side of the membrane. Residues Ile-305–Val-325 traverse the membrane as a helical segment. Over Leu-326–Lys-337 the chain is Cytoplasmic. A helical transmembrane segment spans residues Val-338–Val-358. Residues Asn-359–Asn-369 are Lumenal-facing. Residues Leu-370–Gly-390 traverse the membrane as a helical segment. Over Asp-391 to Gln-447 the chain is Cytoplasmic. Residue Ser-415 is modified to Phosphoserine. The helical transmembrane segment at Leu-448 to Leu-468 threads the bilayer. The Lumenal portion of the chain corresponds to His-469–Thr-472. A helical membrane pass occupies residues Pro-473 to Leu-493. Over His-494–Trp-503 the chain is Cytoplasmic.

Belongs to the PIGW family.

It is found in the endoplasmic reticulum membrane. It participates in glycolipid biosynthesis; glycosylphosphatidylinositol-anchor biosynthesis. Acyltransferase that catalyzes the acyl transfer from an acyl-CoA at the 2-OH position of the inositol ring of glucosaminyl phosphatidylinositol (GlcN-PI) to generate glucosaminyl acyl phosphatidylinositol (GlcN-(acyl)PI) and participates in the fourth step of GPI-anchor biosynthesis. Required for the transport of GPI-anchored proteins to the plasma membrane. Acetylation during GPI-anchor biosynthesis is not essential for the subsequent mannosylation and is usually removed soon after the attachment of GPIs to proteins. The polypeptide is Glucosaminyl-phosphatidylinositol-acyltransferase PIGW (Bos taurus (Bovine)).